Consider the following 555-residue polypeptide: F-box only protein 33 (555 aa).

Positions 65–111 constitute an F-box domain; it reads AAGAASLPSELIVHIFSFLPAPDRLRASASCSHWRECLFYPALWPQL.

As to quaternary structure, part of the SCF (SKP1-CUL1-F-box) E3 ubiquitin-protein ligase complex SCF(FBXO33) formed of CUL1, SKP1, RBX1 and FBXO33. Interacts via its N-terminus with YBX1 CSD domain. Directly interacts with SKP1 and CUL1.

It participates in protein modification; protein ubiquitination. In terms of biological role, substrate recognition component of a SCF (SKP1-CUL1-F-box protein) E3 ubiquitin-protein ligase complex which mediates the ubiquitination and subsequent proteasomal degradation of target proteins. Probably recognizes and binds to phosphorylated target proteins. Recognizes YBX1. The protein is F-box only protein 33 (FBXO33) of Homo sapiens (Human).